The chain runs to 127 residues: V-type proton ATPase subunit F (127 aa).

The protein belongs to the V-ATPase F subunit family. V-ATPase is a heteromultimeric enzyme made up of two complexes: the ATP-hydrolytic V1 complex and the proton translocation V0 complex. The V1 complex consists of three catalytic AB heterodimers that form a heterohexamer, three peripheral stalks each consisting of EG heterodimers, one central rotor including subunits D and F, and the regulatory subunits C and H. The proton translocation complex V0 consists of the proton transport subunit a, a ring of proteolipid subunits c9c'', rotary subunit d, subunits e and f, and the accessory subunits VhaAC45 and ATP6AP2.

Its function is as follows. Subunit of the V1 complex of vacuolar(H+)-ATPase (V-ATPase), a multisubunit enzyme composed of a peripheral complex (V1) that hydrolyzes ATP and a membrane integral complex (V0) that translocates protons. V-ATPase is responsible for acidifying and maintaining the pH of intracellular compartments and in some cell types, is targeted to the plasma membrane, where it is responsible for acidifying the extracellular environment. This Anopheles gambiae (African malaria mosquito) protein is V-type proton ATPase subunit F (Vha14).